Here is a 122-residue protein sequence, read N- to C-terminus: Large ribosomal subunit protein uL14 (122 aa).

This sequence belongs to the universal ribosomal protein uL14 family. Part of the 50S ribosomal subunit. Forms a cluster with proteins L3 and L19. In the 70S ribosome, L14 and L19 interact and together make contacts with the 16S rRNA in bridges B5 and B8.

Its function is as follows. Binds to 23S rRNA. Forms part of two intersubunit bridges in the 70S ribosome. The chain is Large ribosomal subunit protein uL14 from Sinorhizobium fredii (strain NBRC 101917 / NGR234).